We begin with the raw amino-acid sequence, 1403 residues long: MRRGAAWALLLAAALGLGARGVRAAVALADFYPFGTKRGDAVTPKQDDGGSGLQPLSVPFPFFGAEHSGLYVNNNGIISFLKEVSQFTPVAFPIAKDRCVVAAFWADVDNRRAGDVYYREATDAAMLNRATEDIRRYFPELPDFSATWVFVATWYRVTFFGGSSSSPVNTFQTVLITDGRFSFTIFNYESILWTTGTHASSGGDADGLGGIAAQAGFNAGDGHRYFNIPGSRTADMAEVETTTNVGVPGRWAFRIDDAQVRVGGCGHTTSVCLVLRPCLNGGKCIDDCVTGNPSYTCSCLAGFTGRRCHLDVNECASHPCQNGGTCTHGVNSFSCQCPAGFQGPTCESAQSPCDNKVCQNGGQCQAESSSAVCVCQAGYTGATCETDVDECSSDPCLNGGSCVDLVGNYSCICVEPFEGPQCETGSYVVPSPCLSNPCLNGGTCVDADQGYVCECPEGFMGLDCRERILNDCDCRNGGRCLGANTTICQCPPGFFGLLCEFEVTATPCNMNTQCPDGGYCMEYGGSYLCVCHTDHNISHSLPSPCDSDPCFNGGSCDAHEDSYTCECPRGFHGRHCEKARPHLCSSGPCRNGGTCKETGDEYRCTCPYRFTGRHCEIGKPDSCASGPCHNGGTCFHYIGKYKCDCPPGFSGRHCEIAPSPCFRSPCMNGGICEDLGTDFSCHCQPGYTGHRCQAEVDCGQPEEVKHATMRLNGTRMGSVALYTCDPGFSLSVLSHMRVCQPQGVWSQPPQCIEVDECQSQPCLHKGSCQDLIAGYQCLCSPGYEGVHCELETDECQAQPCRNGGSCRDLPGAFICQCPEGFVGTHCETEVDACASSPCQHGGRCEDGGGAYLCVCPEGFFGYNCETVSDPCFSSPCGGRGYCLASNGSHSCTCKVGYTGKDCTKELLPPTALRVERVEESGVSISWSPPEGTTARQVLDGYAVTYASSDGSSRRTDFVDRSRSSHQLRALAAGRAYNISVFSVKRNTNNKNDISRPAALLTRTRPRPIEDFEVTNISANAISVQWALHRIQHATVSRVRVSVLYPEDTVVQSTEVDRSVDRLTFGDLLPGRRYSVRLTTLSGPGGAEYPTESLASAPLNVWTRPLPPANLTASRVTATSAHMVWDPPTPGISLEAYVINVTTSQNTKSRYIPNGKLVSYTVRDLMPGRRYQLSVTAVQSTEQGQLHSEPAHLYIITSPRDGTDRRWHQGGHHSRMLRNRPAPLRLPELRLLNDHGAPETPTQPPRFSELVDGRARVSARFGGLPSRAVTVRSQPTTPVPLKNTEAPEQARLALQLPKNNSKDTESTPGSCSEDTCQNGGTCVPGANAHSCDCRPGFKGRHCELACEKVPRPCTRLFSETKSFPVWEGDVCHHVYKKVYKVHQDVCFKERCQSTSLKKLKQESN.

The first 24 residues, Met1–Ala24, serve as a signal peptide directing secretion. One can recognise an NIDO domain in the interval Ala103–Ala258. EGF-like domains are found at residues Thr268–His309, Asp311–Glu347, and Ala349–Glu385. Disulfide bonds link Cys272–Cys284, Cys278–Cys297, Cys299–Cys308, Cys315–Cys326, Cys320–Cys335, Cys337–Cys346, Cys353–Cys364, Cys358–Cys373, Cys375–Cys384, Cys391–Cys402, Cys396–Cys411, Cys413–Cys422, Cys433–Cys444, Cys438–Cys453, Cys455–Cys464, Cys472–Cys480, Cys474–Cys488, and Cys490–Cys499. Asn292 carries an N-linked (GlcNAc...) asparagine glycan. Positions Asp387–Glu423 constitute an EGF-like 4; calcium-binding domain. Asn408 carries an N-linked (GlcNAc...) asparagine glycan. EGF-like domains follow at residues Val429 to Arg465 and Ile468 to Glu500. An N-linked (GlcNAc...) asparagine glycan is attached at Asn484. Asn536 carries an N-linked (GlcNAc...) asparagine glycan. EGF-like domains lie at Leu541–Glu577, Arg580–Glu616, Lys619–Glu655, and Ala657–Gln693. 26 disulfides stabilise this stretch: Cys545/Cys556, Cys550/Cys565, Cys567/Cys576, Cys584/Cys595, Cys589/Cys604, Cys606/Cys615, Cys623/Cys634, Cys628/Cys643, Cys645/Cys654, Cys661/Cys672, Cys666/Cys681, Cys683/Cys692, Cys698/Cys739, Cys724/Cys751, Cys757/Cys768, Cys762/Cys777, Cys779/Cys788, Cys795/Cys806, Cys800/Cys815, Cys817/Cys826, Cys833/Cys844, Cys838/Cys853, Cys855/Cys864, Cys871/Cys882, Cys876/Cys891, and Cys893/Cys902. The Sushi domain maps to Val696–Glu753. N-linked (GlcNAc...) asparagine glycosylation occurs at Asn712. One can recognise an EGF-like 11; calcium-binding domain in the interval Glu753 to Glu789. Residues Glu791 to Glu827 form the EGF-like 12; calcium-binding domain. 2 EGF-like domains span residues Glu829–Glu865 and Val867–Thr903. N-linked (GlcNAc...) asparagine glycosylation is present at Asn886. Fibronectin type-III domains are found at residues Pro908–Arg1006, Pro1007–Leu1105, and Pro1106–Asp1200. Residues Asn977, Asn1015, Asn1109, Asn1139, and Asn1298 are each glycosylated (N-linked (GlcNAc...) asparagine). The disordered stretch occupies residues Leu1295–Thr1314. Residues Ser1305–Thr1314 show a composition bias toward polar residues. The region spanning Thr1306–Glu1342 is the EGF-like 15 domain. Cystine bridges form between Cys1310/Cys1321, Cys1315/Cys1330, and Cys1332/Cys1341.

Phosphorylated on serine and threonine residues. In terms of processing, N-glycosylated. As to expression, expressed in liver.

Its subcellular location is the secreted. The protein localises to the extracellular space. It localises to the extracellular matrix. This Rattus norvegicus (Rat) protein is Sushi, nidogen and EGF-like domain-containing protein 1.